The following is a 1628-amino-acid chain: Lysine-specific histone demethylase 1 homolog 3 (1628 aa).

The disordered stretch occupies residues 1-71 (MDGKEKKSGS…KKLSALGKDS (71 aa)). A compositionally biased stretch (acidic residues) spans 19–28 (FDDDADDDEP). A compositionally biased stretch (basic and acidic residues) spans 43–64 (KDKVETESTGKQRQKQVVEKKL). Residues 378–478 (GRAAAVTAGL…AGISSVNGKA (101 aa)) form the SWIRM domain. FAD-binding residues include glutamate 647, arginine 649, arginine 655, and glutamate 1077. The tract at residues 1271 to 1317 (SGKKSLRQANTTNTSRIRRKLNSPDTDSKGKLSNGNDVKTDEEFEDN) is disordered.

This sequence belongs to the flavin monoamine oxidase family. FAD is required as a cofactor.

Probable histone demethylase that reduces the levels of histone H3 'Lys-4' methylation in chromatin. This Arabidopsis thaliana (Mouse-ear cress) protein is Lysine-specific histone demethylase 1 homolog 3 (LDL3).